The sequence spans 241 residues: Probable xyloglucan-specific endo-beta-1,4-glucanase A (241 aa).

The N-terminal stretch at 1–18 is a signal peptide; it reads MKFNLALALSLTVATAEA.

This sequence belongs to the glycosyl hydrolase 12 (cellulase H) family.

It localises to the secreted. It carries out the reaction xyloglucan + H2O = xyloglucan oligosaccharides.. Its function is as follows. Catalyzes endohydrolysis of 1,4-beta-D-glucosidic linkages in xyloglucan with retention of the beta-configuration of the glycosyl residues. Specific for xyloglucan and does not hydrolyze other cell wall components. This chain is Probable xyloglucan-specific endo-beta-1,4-glucanase A (xgeA), found in Aspergillus clavatus (strain ATCC 1007 / CBS 513.65 / DSM 816 / NCTC 3887 / NRRL 1 / QM 1276 / 107).